A 551-amino-acid polypeptide reads, in one-letter code: MRRVSLPNQLNETRRRSPTRGERIFGGYNTSDVYAMAFDEMFDAQGIVRGPYKGIYAELAPSDASELKARADALGRAFIDQGITFSLSGQERPFPLDLVPRVISAPEWTRLERGITQRVKALECYLDDIYGDQEILRDGVIPRRLVTSCEHFHRQAVGIVPPNGVRIHVAGIDLIRDHRGDFRVLEDNLRSPSGVSYVMENRRTMARVFPNLFATHRVRAVDDYASHLLRALRNSAATNEADPTVVVLTPGVYNSAYFEHSLLARQMGVELVEGRDLFCRDNQVYMRTTEGERQVDVIYRRIDDAFLDPLQFRADSVLGVAGLVNAARAGNVVLSSAIGNGVGDDKLVYTYVPTMIEYYLHEKPLLANVETLRCWLDDEREEVLDRIRELVLKPVEGSGGYGIVFGPEASQAELAAVSQKIRDDPRSWIAQPMMELSTVPTRIEGTLAPRYVDLRPFAVNDGNEVWVLPGGLTRVALVEGSRVVNSSQGGGSKDTWVLAPRASAAARELGAAQIVRSLPQPLCDPTVDASGYEPHDQQPQQQQQQQQQAFH.

Over residues 1-11 the composition is skewed to polar residues; sequence MRRVSLPNQLN. Disordered regions lie at residues 1 to 22 and 523 to 551; these read MRRVSLPNQLNETRRRSPTRGE and CDPTVDASGYEPHDQQPQQQQQQQQQAFH. Positions 12–22 are enriched in basic and acidic residues; that stretch reads ETRRRSPTRGE. The segment covering 537–551 has biased composition (low complexity); that stretch reads QQPQQQQQQQQQAFH.

The protein to Synechocystis PCC 6803 sll0335 and to M.tuberculosis Rv2567.

This is an uncharacterized protein from Mycobacterium bovis (strain ATCC BAA-935 / AF2122/97).